The following is a 300-amino-acid chain: MSSKAEKDIKWGIAPIGWRNDDIPSIGKDNNLQQLLSDIVVAGFQGTEVGGFFPGPEKLNYELKLRNLEIAGQWFSSYIIRDGIEKASEAFEKHCQYLKAINAPVAVVSEQTYTIQRSDTANIFKDKPYFTDKEWDEVCKGLNHYGEIAAKYGLKVAYHHHMGTGIQTKEETDRLMANTDPKLVGLLYDTGHIAVSDGDYMALLNAHIDRVVHVHFKDVRRSKEEECRAKGLTFQGSFLNGMFTVPGDGDLDFKPVYDKLIANNYKGWIVVEAEQDPSKANPLEMAQIAHRYIKQHLIEN.

The protein belongs to the IolE/MocC family. The cofactor is glutathione. Co(2+) serves as cofactor. Mn(2+) is required as a cofactor.

It catalyses the reaction scyllo-inosose = 3D-3,5/4-trihydroxycyclohexane-1,2-dione + H2O. It participates in polyol metabolism; myo-inositol degradation into acetyl-CoA; acetyl-CoA from myo-inositol: step 2/7. In terms of biological role, catalyzes the dehydration of inosose (2-keto-myo-inositol, 2KMI or 2,4,6/3,5-pentahydroxycyclohexanone) to 3D-(3,5/4)-trihydroxycyclohexane-1,2-dione (D-2,3-diketo-4-deoxy-epi-inositol). This Lactiplantibacillus plantarum (strain ATCC BAA-793 / NCIMB 8826 / WCFS1) (Lactobacillus plantarum) protein is Inosose dehydratase.